A 62-amino-acid chain; its full sequence is Large ribosomal subunit protein bL28 (62 aa).

It belongs to the bacterial ribosomal protein bL28 family.

This chain is Large ribosomal subunit protein bL28, found in Streptococcus gordonii (strain Challis / ATCC 35105 / BCRC 15272 / CH1 / DL1 / V288).